We begin with the raw amino-acid sequence, 578 residues long: Proline--tRNA ligase (578 aa).

The protein belongs to the class-II aminoacyl-tRNA synthetase family. ProS type 1 subfamily. Homodimer.

The protein resides in the cytoplasm. It catalyses the reaction tRNA(Pro) + L-proline + ATP = L-prolyl-tRNA(Pro) + AMP + diphosphate. Functionally, catalyzes the attachment of proline to tRNA(Pro) in a two-step reaction: proline is first activated by ATP to form Pro-AMP and then transferred to the acceptor end of tRNA(Pro). As ProRS can inadvertently accommodate and process non-cognate amino acids such as alanine and cysteine, to avoid such errors it has two additional distinct editing activities against alanine. One activity is designated as 'pretransfer' editing and involves the tRNA(Pro)-independent hydrolysis of activated Ala-AMP. The other activity is designated 'posttransfer' editing and involves deacylation of mischarged Ala-tRNA(Pro). The misacylated Cys-tRNA(Pro) is not edited by ProRS. In Syntrophus aciditrophicus (strain SB), this protein is Proline--tRNA ligase.